The sequence spans 872 residues: Alanine--tRNA ligase (872 aa).

Positions 563, 567, 665, and 669 each coordinate Zn(2+).

This sequence belongs to the class-II aminoacyl-tRNA synthetase family. Zn(2+) serves as cofactor.

The protein localises to the cytoplasm. It catalyses the reaction tRNA(Ala) + L-alanine + ATP = L-alanyl-tRNA(Ala) + AMP + diphosphate. Catalyzes the attachment of alanine to tRNA(Ala) in a two-step reaction: alanine is first activated by ATP to form Ala-AMP and then transferred to the acceptor end of tRNA(Ala). Also edits incorrectly charged Ser-tRNA(Ala) and Gly-tRNA(Ala) via its editing domain. The protein is Alanine--tRNA ligase of Bacteroides thetaiotaomicron (strain ATCC 29148 / DSM 2079 / JCM 5827 / CCUG 10774 / NCTC 10582 / VPI-5482 / E50).